We begin with the raw amino-acid sequence, 229 residues long: UPF0500 protein C1orf216 (229 aa).

Residues methionine 1–leucine 144 are disordered. The span at serine 62–phenylalanine 71 shows a compositional bias: polar residues. Low complexity-rich tracts occupy residues proline 84–alanine 93 and serine 115–serine 126.

Belongs to the UPF0500 family.

This is UPF0500 protein C1orf216 (C1orf216) from Homo sapiens (Human).